We begin with the raw amino-acid sequence, 41 residues long: MKIRNSLKSLLGRHRDNRLVRRKGRVYIINKTQKRYKARQG.

The protein belongs to the bacterial ribosomal protein bL36 family.

The sequence is that of Large ribosomal subunit protein bL36 from Xanthobacter autotrophicus (strain ATCC BAA-1158 / Py2).